The sequence spans 60 residues: UPF0434 protein Bpro_2950 (60 aa).

It belongs to the UPF0434 family.

The polypeptide is UPF0434 protein Bpro_2950 (Polaromonas sp. (strain JS666 / ATCC BAA-500)).